Here is a 209-residue protein sequence, read N- to C-terminus: UPF0319 protein VF_1616 (209 aa).

Positions 1–21 are cleaved as a signal peptide; sequence MKIQSIFAASFCLLSSISAHA.

This sequence belongs to the UPF0319 family.

The polypeptide is UPF0319 protein VF_1616 (Aliivibrio fischeri (strain ATCC 700601 / ES114) (Vibrio fischeri)).